Here is a 150-residue protein sequence, read N- to C-terminus: MIP18 family protein FAM96A (150 aa).

The protein belongs to the MIP18 family.

Its function is as follows. May play a role in chromosome segregation through establishment of sister chromatid cohesion. The chain is MIP18 family protein FAM96A (fam96A) from Dictyostelium discoideum (Social amoeba).